Consider the following 555-residue polypeptide: MERPAPGEVVMSQAIQPAHATARGELSAGQLLKWIDTTACLAAEKHAGVSCVTASVDDIQFEETARVGQVITIKAKVTRAFSTSMEISIKVMVQDMLTGIEKLVSVAFSTFVAKPVGKEKIHLKPVTLLTEQDHVEHNLAAERRKVRLQHEDTFNNLMKESSKFDDLIFDEEEGAVSTRGTSVQSIELVLPPHANHHGNTFGGQIMAWMETVATISASRLCWAHPFLKSVDMFKFRGPSTVGDRLVFTAIVNNTFQTCVEVGVRVEAFDCQEWAEGRGRHINSAFLIYNAADDKENLITFPRIQPISKDDFRRYRGAIARKRIRLGRKYVISHKEEVPLCIHWDISKQASLSDSNVEALKKLAAKRGWEVTSTVEKIKIYTLEEHDVLSVWVEKHVGSPAHLAYRLLSDFTKRPLWDPHFVSCEVIDWVSEDDQLYHITCPILNDDKPKDLVVLVSRRKPLKDGNTYTVAVKSVILPSVPPSPQYIRSEIICAGFLIHAIDSNSCIVSYFNHMSASILPYFAGNLGGWSKSIEETAASCIQFLENPPDDGFVSTF.

One can recognise a HotDog ACOT-type 1 domain in the interval 5-117; that stretch reads APGEVVMSQA…FSTFVAKPVG (113 aa). Lysine 33 bears the N6-succinyllysine mark. Residues 53–55, 82–84, and arginine 144 each bind CoA; these read TAS and STS. Lysine 159 and lysine 228 each carry N6-succinyllysine. The region spanning 179 to 294 is the HotDog ACOT-type 2 domain; it reads RGTSVQSIEL…FLIYNAADDK (116 aa). 234 to 236 is a binding site for CoA; it reads KFR. An START domain is found at 340-549; it reads CIHWDISKQA…IQFLENPPDD (210 aa).

As to quaternary structure, homodimer or homotetramer.

The protein localises to the cytoplasm. It localises to the cytosol. The enzyme catalyses acetyl-CoA + H2O = acetate + CoA + H(+). The catalysed reaction is butanoyl-CoA + H2O = butanoate + CoA + H(+). It carries out the reaction hexanoyl-CoA + H2O = hexanoate + CoA + H(+). The protein operates within lipid metabolism; fatty acid metabolism. Its activity is regulated as follows. Inhibited by ADP. Active in the presence of ATP. Cold labile, it dissociates into inactive monomers at low temperature. Catalyzes the hydrolysis of acyl-CoAs into free fatty acids and coenzyme A (CoASH), regulating their respective intracellular levels. Preferentially hydrolyzes acetyl-CoA. This is Acetyl-coenzyme A thioesterase (ACOT12) from Homo sapiens (Human).